The primary structure comprises 346 residues: 3-isopropylmalate dehydrogenase (346 aa).

Residue 76-87 (GPQWTDPNNRPE) coordinates NAD(+). Substrate-binding residues include R94, R104, R132, and D217. 3 residues coordinate Mg(2+): D217, D241, and D245. 275–287 (GSAPDIANQNLAN) provides a ligand contact to NAD(+).

Belongs to the isocitrate and isopropylmalate dehydrogenases family. LeuB type 1 subfamily. As to quaternary structure, homodimer. The cofactor is Mg(2+). Requires Mn(2+) as cofactor.

Its subcellular location is the cytoplasm. It carries out the reaction (2R,3S)-3-isopropylmalate + NAD(+) = 4-methyl-2-oxopentanoate + CO2 + NADH. It functions in the pathway amino-acid biosynthesis; L-leucine biosynthesis; L-leucine from 3-methyl-2-oxobutanoate: step 3/4. In terms of biological role, catalyzes the oxidation of 3-carboxy-2-hydroxy-4-methylpentanoate (3-isopropylmalate) to 3-carboxy-4-methyl-2-oxopentanoate. The product decarboxylates to 4-methyl-2 oxopentanoate. The chain is 3-isopropylmalate dehydrogenase from Staphylococcus haemolyticus (strain JCSC1435).